The following is a 135-amino-acid chain: Large ribosomal subunit protein eL32 (135 aa).

The disordered stretch occupies residues 51-77 (GRDNKFRLKMKGKPRPPEPGYRSPRKV).

Belongs to the eukaryotic ribosomal protein eL32 family.

The polypeptide is Large ribosomal subunit protein eL32 (rpl32e) (Nanoarchaeum equitans (strain Kin4-M)).